The primary structure comprises 367 residues: Glutamate 5-kinase (367 aa).

Lys10 lines the ATP pocket. Substrate contacts are provided by Ser50, Asp137, and Asn149. Residues 169–170 (TD) and 211–217 (TGGMETK) contribute to the ATP site. In terms of domain architecture, PUA spans 275 to 353 (AGDITVDDGA…QDISDILGYE (79 aa)).

It belongs to the glutamate 5-kinase family.

It localises to the cytoplasm. The enzyme catalyses L-glutamate + ATP = L-glutamyl 5-phosphate + ADP. It participates in amino-acid biosynthesis; L-proline biosynthesis; L-glutamate 5-semialdehyde from L-glutamate: step 1/2. In terms of biological role, catalyzes the transfer of a phosphate group to glutamate to form L-glutamate 5-phosphate. The protein is Glutamate 5-kinase of Sodalis glossinidius (strain morsitans).